We begin with the raw amino-acid sequence, 455 residues long: Bifunctional protein GlmU (455 aa).

The tract at residues 1 to 230 is pyrophosphorylase; it reads MVNKNAIILA…FDESMGVNDR (230 aa). Residues 9 to 12, lysine 23, glutamine 73, 78 to 79, 101 to 103, glycine 140, glutamate 155, asparagine 170, and asparagine 228 each bind UDP-N-acetyl-alpha-D-glucosamine; these read LAAG, GT, and SGD. Mg(2+) is bound at residue aspartate 103. Asparagine 228 provides a ligand contact to Mg(2+). Residues 231–251 are linker; that stretch reads SALAKATKIMQKRINTQLMKD. Positions 252–455 are N-acetyltransferase; sequence GVTLVDPETA…KPGYAKKLPW (204 aa). UDP-N-acetyl-alpha-D-glucosamine-binding residues include arginine 333 and lysine 351. The active-site Proton acceptor is histidine 363. Tyrosine 366 and asparagine 377 together coordinate UDP-N-acetyl-alpha-D-glucosamine. Residues 386–387, serine 405, alanine 423, and arginine 440 each bind acetyl-CoA; that span reads NY.

This sequence in the N-terminal section; belongs to the N-acetylglucosamine-1-phosphate uridyltransferase family. In the C-terminal section; belongs to the transferase hexapeptide repeat family. In terms of assembly, homotrimer. The cofactor is Mg(2+).

It is found in the cytoplasm. The enzyme catalyses alpha-D-glucosamine 1-phosphate + acetyl-CoA = N-acetyl-alpha-D-glucosamine 1-phosphate + CoA + H(+). The catalysed reaction is N-acetyl-alpha-D-glucosamine 1-phosphate + UTP + H(+) = UDP-N-acetyl-alpha-D-glucosamine + diphosphate. The protein operates within nucleotide-sugar biosynthesis; UDP-N-acetyl-alpha-D-glucosamine biosynthesis; N-acetyl-alpha-D-glucosamine 1-phosphate from alpha-D-glucosamine 6-phosphate (route II): step 2/2. It functions in the pathway nucleotide-sugar biosynthesis; UDP-N-acetyl-alpha-D-glucosamine biosynthesis; UDP-N-acetyl-alpha-D-glucosamine from N-acetyl-alpha-D-glucosamine 1-phosphate: step 1/1. It participates in bacterial outer membrane biogenesis; LPS lipid A biosynthesis. Catalyzes the last two sequential reactions in the de novo biosynthetic pathway for UDP-N-acetylglucosamine (UDP-GlcNAc). The C-terminal domain catalyzes the transfer of acetyl group from acetyl coenzyme A to glucosamine-1-phosphate (GlcN-1-P) to produce N-acetylglucosamine-1-phosphate (GlcNAc-1-P), which is converted into UDP-GlcNAc by the transfer of uridine 5-monophosphate (from uridine 5-triphosphate), a reaction catalyzed by the N-terminal domain. The polypeptide is Bifunctional protein GlmU (Limosilactobacillus fermentum (strain NBRC 3956 / LMG 18251) (Lactobacillus fermentum)).